We begin with the raw amino-acid sequence, 481 residues long: 3-isopropylmalate dehydratase large subunit (481 aa).

Positions 363, 423, and 426 each coordinate [4Fe-4S] cluster. The segment at 432–459 is disordered; that stretch reads DQLKPGERSASTSNRNFEGRQGPGGRTH.

It belongs to the aconitase/IPM isomerase family. LeuC type 1 subfamily. Heterodimer of LeuC and LeuD. The cofactor is [4Fe-4S] cluster.

It catalyses the reaction (2R,3S)-3-isopropylmalate = (2S)-2-isopropylmalate. It participates in amino-acid biosynthesis; L-leucine biosynthesis; L-leucine from 3-methyl-2-oxobutanoate: step 2/4. Catalyzes the isomerization between 2-isopropylmalate and 3-isopropylmalate, via the formation of 2-isopropylmaleate. This chain is 3-isopropylmalate dehydratase large subunit, found in Corynebacterium glutamicum (strain R).